Reading from the N-terminus, the 179-residue chain is MNRLKEKFQKEITPALVSKFNYKSVMEVPKIEKIVINTGVGDAVSNSKALDNAVEELTQIAGQKPVVTRAKKSIAGFRLREGMPIGAKVTLRGEQMYEFFDKLVSVSLPRVRDFRGVSKKSFDGRGNYTLGVKEQLIFPEIDYDKVSKVRGMDIVIVTTAKTDEEARELLTQFGMPFQK.

The protein belongs to the universal ribosomal protein uL5 family. In terms of assembly, part of the 50S ribosomal subunit; part of the 5S rRNA/L5/L18/L25 subcomplex. Contacts the 5S rRNA and the P site tRNA. Forms a bridge to the 30S subunit in the 70S ribosome.

In terms of biological role, this is one of the proteins that bind and probably mediate the attachment of the 5S RNA into the large ribosomal subunit, where it forms part of the central protuberance. In the 70S ribosome it contacts protein S13 of the 30S subunit (bridge B1b), connecting the 2 subunits; this bridge is implicated in subunit movement. Contacts the P site tRNA; the 5S rRNA and some of its associated proteins might help stabilize positioning of ribosome-bound tRNAs. The chain is Large ribosomal subunit protein uL5 from Bacillus cereus (strain G9842).